The following is a 121-amino-acid chain: Large ribosomal subunit protein bL19 (121 aa).

Belongs to the bacterial ribosomal protein bL19 family.

This protein is located at the 30S-50S ribosomal subunit interface and may play a role in the structure and function of the aminoacyl-tRNA binding site. The chain is Large ribosomal subunit protein bL19 from Chlorobium phaeovibrioides (strain DSM 265 / 1930) (Prosthecochloris vibrioformis (strain DSM 265)).